A 511-amino-acid chain; its full sequence is Colicin-B (511 aa).

Positions 17–24 (DTMVVWPS) match the TonB box motif. Helical transmembrane passes span 455–475 (MASAVALSLFSLTLGSALIAF) and 477–497 (LSATVVGFVGVVIAGAIGAFI).

It belongs to the channel forming colicin family.

It localises to the cell membrane. Functionally, this colicin is a channel-forming colicin. This class of transmembrane toxins depolarize the cytoplasmic membrane, leading to dissipation of cellular energy. In terms of biological role, colicins are polypeptide toxins produced by and active against E.coli and closely related bacteria. In Escherichia coli, this protein is Colicin-B (cba).